The chain runs to 91 residues: MSTFQIHYFASASTYTGRNTESLPAPLPLSSLFDTLEAKYPGIKEKVLSSCSISLGDEYVDLVSDGEKSGNEGLLIQGGDEVAIIPPVSSG.

Gly-91 is modified (1-thioglycine; alternate). At Gly-91 the chain carries Glycyl adenylate; alternate.

Belongs to the MoaD family. MOCS2A subfamily. Heterotetramer; composed of 2 small (MOCS2A) and 2 large (MOCS2B) subunits. In terms of processing, C-terminal thiocarboxylation occurs in 2 steps, it is first acyl-adenylated (-COAMP) via the hesA/moeB/thiF part of uba4, then thiocarboxylated (-COSH) via the rhodanese domain of uba4.

The protein localises to the cytoplasm. It functions in the pathway cofactor biosynthesis; molybdopterin biosynthesis. Acts as a sulfur carrier required for molybdopterin biosynthesis. Component of the molybdopterin synthase complex that catalyzes the conversion of precursor Z into molybdopterin by mediating the incorporation of 2 sulfur atoms into precursor Z to generate a dithiolene group. In the complex, serves as sulfur donor by being thiocarboxylated (-COSH) at its C-terminus by uba4. After interaction with MOCS2B, the sulfur is then transferred to precursor Z to form molybdopterin. This chain is Molybdopterin synthase sulfur carrier subunit, found in Emericella nidulans (strain FGSC A4 / ATCC 38163 / CBS 112.46 / NRRL 194 / M139) (Aspergillus nidulans).